Here is a 294-residue protein sequence, read N- to C-terminus: UDP-3-O-acyl-N-acetylglucosamine deacetylase (294 aa).

The Zn(2+) site is built by His-75, His-232, and Asp-236. Catalysis depends on His-259, which acts as the Proton donor.

The protein belongs to the LpxC family. Requires Zn(2+) as cofactor.

It catalyses the reaction a UDP-3-O-[(3R)-3-hydroxyacyl]-N-acetyl-alpha-D-glucosamine + H2O = a UDP-3-O-[(3R)-3-hydroxyacyl]-alpha-D-glucosamine + acetate. It functions in the pathway glycolipid biosynthesis; lipid IV(A) biosynthesis; lipid IV(A) from (3R)-3-hydroxytetradecanoyl-[acyl-carrier-protein] and UDP-N-acetyl-alpha-D-glucosamine: step 2/6. Its function is as follows. Catalyzes the hydrolysis of UDP-3-O-myristoyl-N-acetylglucosamine to form UDP-3-O-myristoylglucosamine and acetate, the committed step in lipid A biosynthesis. The sequence is that of UDP-3-O-acyl-N-acetylglucosamine deacetylase from Campylobacter jejuni subsp. jejuni serotype O:6 (strain 81116 / NCTC 11828).